We begin with the raw amino-acid sequence, 186 residues long: UPF0301 protein NTHI0415 (186 aa).

This sequence belongs to the UPF0301 (AlgH) family.

This Haemophilus influenzae (strain 86-028NP) protein is UPF0301 protein NTHI0415.